The following is a 96-amino-acid chain: C-C motif chemokine 20 (96 aa).

An N-terminal signal peptide occupies residues 1-26 (MACKHLPFLALAGVLLAYLCSQSEAA). 2 disulfide bridges follow: cysteine 31/cysteine 58 and cysteine 32/cysteine 74.

It belongs to the intercrine beta (chemokine CC) family. In terms of tissue distribution, low levels in thymus and lung.

It is found in the secreted. Acts as a ligand for C-C chemokine receptor CCR6. Signals through binding and activation of CCR6 and induces a strong chemotactic response and mobilization of intracellular calcium ions. The ligand-receptor pair CCL20-CCR6 is responsible for the chemotaxis of dendritic cells (DC), effector/memory T-cells and B-cells and plays an important role at skin and mucosal surfaces under homeostatic and inflammatory conditions, as well as in pathology, including cancer and autoimmune diseases. CCL20 acts as a chemotactic factor that attracts lymphocytes and, slightly, neutrophils, but not monocytes. Involved in the recruitment of both the pro-inflammatory IL17 producing helper T-cells (Th17) and the regulatory T-cells (Treg) to sites of inflammation. Required for optimal migration of thymic natural regulatory T cells (nTregs) and DN1 early thymocyte progenitor cells. Positively regulates sperm motility and chemotaxis via its binding to CCR6 which triggers Ca2+ mobilization in the sperm which is important for its motility. May be involved in formation and function of the mucosal lymphoid tissues by attracting lymphocytes and dendritic cells towards epithelial cells. The chain is C-C motif chemokine 20 (Ccl20) from Rattus norvegicus (Rat).